The sequence spans 200 residues: Protein GrpE (200 aa).

A compositionally biased stretch (basic and acidic residues) spans 1–11; it reads MTDNDGQKDFS. The segment at 1 to 43 is disordered; it reads MTDNDGQKDFSEAAAENAGSKPGEPRVSKPYIMPDDPEETPSE.

The protein belongs to the GrpE family. Homodimer.

Its subcellular location is the cytoplasm. Its function is as follows. Participates actively in the response to hyperosmotic and heat shock by preventing the aggregation of stress-denatured proteins, in association with DnaK and GrpE. It is the nucleotide exchange factor for DnaK and may function as a thermosensor. Unfolded proteins bind initially to DnaJ; upon interaction with the DnaJ-bound protein, DnaK hydrolyzes its bound ATP, resulting in the formation of a stable complex. GrpE releases ADP from DnaK; ATP binding to DnaK triggers the release of the substrate protein, thus completing the reaction cycle. Several rounds of ATP-dependent interactions between DnaJ, DnaK and GrpE are required for fully efficient folding. The sequence is that of Protein GrpE from Afipia carboxidovorans (strain ATCC 49405 / DSM 1227 / KCTC 32145 / OM5) (Oligotropha carboxidovorans).